The chain runs to 776 residues: Ent-8-alpha-hydroxylabd-13-en-15-yl diphosphate synthase CPS4, chloroplastic (776 aa).

A chloroplast-targeting transit peptide spans 1-60 (MSFASNATGFRIPLTTCVYPSPILRFNAKVGSGSSYGTTEAQRNMKCVDGIGRSRVVAVA). Lysine 226 is a substrate binding site. 2 residues coordinate Mg(2+): aspartate 357 and aspartate 359. The DXDD motif motif lies at 357-360 (DSDD). Position 443 (lysine 443) interacts with substrate.

Belongs to the terpene synthase family. Requires Mg(2+) as cofactor.

The protein resides in the plastid. The protein localises to the chloroplast. It catalyses the reaction ent-8alpha-hydroxylabd-13-en-15-yl diphosphate = (2E,6E,10E)-geranylgeranyl diphosphate + H2O. It participates in secondary metabolite biosynthesis; terpenoid biosynthesis. Its function is as follows. Involved in diterpenoid biosynthesis. Catalyzes the conversion of all-trans-geranylgeranyl diphosphate to ent-8alpha-hydroxylabd-13-en-15-yl diphosphate. This is Ent-8-alpha-hydroxylabd-13-en-15-yl diphosphate synthase CPS4, chloroplastic from Salvia miltiorrhiza (Chinese sage).